The sequence spans 429 residues: Histidinol dehydrogenase (429 aa).

NAD(+) is bound by residues Tyr130, Gln191, and Asn214. The substrate site is built by Ser237, Gln259, and His262. Gln259 and His262 together coordinate Zn(2+). Active-site proton acceptor residues include Glu327 and His328. Positions 328, 361, 415, and 420 each coordinate substrate. Asp361 contacts Zn(2+). His420 serves as a coordination point for Zn(2+).

It belongs to the histidinol dehydrogenase family. It depends on Zn(2+) as a cofactor.

It carries out the reaction L-histidinol + 2 NAD(+) + H2O = L-histidine + 2 NADH + 3 H(+). It functions in the pathway amino-acid biosynthesis; L-histidine biosynthesis; L-histidine from 5-phospho-alpha-D-ribose 1-diphosphate: step 9/9. In terms of biological role, catalyzes the sequential NAD-dependent oxidations of L-histidinol to L-histidinaldehyde and then to L-histidine. The sequence is that of Histidinol dehydrogenase from Neisseria meningitidis serogroup A / serotype 4A (strain DSM 15465 / Z2491).